The chain runs to 287 residues: Phosphatidylserine decarboxylase proenzyme (287 aa).

Residues Asp89, His146, and Ser252 each act as charge relay system; for autoendoproteolytic cleavage activity in the active site. The active-site Schiff-base intermediate with substrate; via pyruvic acid; for decarboxylase activity is the Ser252. Ser252 is modified (pyruvic acid (Ser); by autocatalysis).

Belongs to the phosphatidylserine decarboxylase family. PSD-B subfamily. Prokaryotic type I sub-subfamily. Heterodimer of a large membrane-associated beta subunit and a small pyruvoyl-containing alpha subunit. Requires pyruvate as cofactor. In terms of processing, is synthesized initially as an inactive proenzyme. Formation of the active enzyme involves a self-maturation process in which the active site pyruvoyl group is generated from an internal serine residue via an autocatalytic post-translational modification. Two non-identical subunits are generated from the proenzyme in this reaction, and the pyruvate is formed at the N-terminus of the alpha chain, which is derived from the carboxyl end of the proenzyme. The autoendoproteolytic cleavage occurs by a canonical serine protease mechanism, in which the side chain hydroxyl group of the serine supplies its oxygen atom to form the C-terminus of the beta chain, while the remainder of the serine residue undergoes an oxidative deamination to produce ammonia and the pyruvoyl prosthetic group on the alpha chain. During this reaction, the Ser that is part of the protease active site of the proenzyme becomes the pyruvoyl prosthetic group, which constitutes an essential element of the active site of the mature decarboxylase.

Its subcellular location is the cell membrane. The enzyme catalyses a 1,2-diacyl-sn-glycero-3-phospho-L-serine + H(+) = a 1,2-diacyl-sn-glycero-3-phosphoethanolamine + CO2. It participates in phospholipid metabolism; phosphatidylethanolamine biosynthesis; phosphatidylethanolamine from CDP-diacylglycerol: step 2/2. In terms of biological role, catalyzes the formation of phosphatidylethanolamine (PtdEtn) from phosphatidylserine (PtdSer). This chain is Phosphatidylserine decarboxylase proenzyme, found in Shewanella amazonensis (strain ATCC BAA-1098 / SB2B).